The primary structure comprises 501 residues: Atypical kinase COQ8, mitochondrial (501 aa).

The N-terminal 29 residues, 1-29 (MVTNMVKLRNLRRLYCSSRLLRTIQNGRI), are a transit peptide targeting the mitochondrion. Residues 41–69 (YTTKSAKEGEENVERKHEEEKKDTLKSSS) are disordered. The span at 45–65 (SAKEGEENVERKHEEEKKDTL) shows a compositional bias: basic and acidic residues. The KxGQ motif motif lies at 134-137 (KIGQ). The 314-residue stretch at 188 to 501 (KFDKIPMAAA…LFKEIFAYKV (314 aa)) folds into the Protein kinase domain. An AAAS motif motif is present at residues 195–198 (AAAS). Residues S198, K216, and 303–306 (MTRM) each bind ATP. D346 serves as the catalytic Proton acceptor. The ATP site is built by N351 and D365.

Belongs to the protein kinase superfamily. ADCK protein kinase family. As to quaternary structure, forms homopolymers. Predominantly associated with a complex of about 500 kDa.

The protein resides in the mitochondrion inner membrane. Its pathway is cofactor biosynthesis; ubiquinone biosynthesis. Functionally, atypical kinase involved in the biosynthesis of coenzyme Q, also named ubiquinone, an essential lipid-soluble electron transporter for aerobic cellular respiration. Its substrate specificity is still unclear: may act as a protein kinase that mediates phosphorylation of COQ3, COQ5 and/or COQ7. According to other reports, acts as a small molecule kinase, possibly a lipid kinase that phosphorylates a prenyl lipid in the ubiquinone biosynthesis pathway, as suggested by its ability to bind coenzyme Q lipid intermediates. This Saccharomyces cerevisiae (strain ATCC 204508 / S288c) (Baker's yeast) protein is Atypical kinase COQ8, mitochondrial (COQ8).